A 249-amino-acid polypeptide reads, in one-letter code: Uridylate kinase (249 aa).

21–24 (KLSG) provides a ligand contact to ATP. G63 contacts UMP. Positions 64 and 68 each coordinate ATP. UMP-binding positions include D84 and 145–152 (TGNPFVTT). ATP contacts are provided by T172, Y178, and D181.

It belongs to the UMP kinase family. In terms of assembly, homohexamer.

Its subcellular location is the cytoplasm. The enzyme catalyses UMP + ATP = UDP + ADP. Its pathway is pyrimidine metabolism; CTP biosynthesis via de novo pathway; UDP from UMP (UMPK route): step 1/1. Its activity is regulated as follows. Inhibited by UTP. In terms of biological role, catalyzes the reversible phosphorylation of UMP to UDP. The sequence is that of Uridylate kinase from Francisella tularensis subsp. holarctica (strain FTNF002-00 / FTA).